Consider the following 105-residue polypeptide: Large ribosomal subunit protein bL21 (105 aa).

Belongs to the bacterial ribosomal protein bL21 family. Part of the 50S ribosomal subunit. Contacts protein L20.

Its function is as follows. This protein binds to 23S rRNA in the presence of protein L20. This is Large ribosomal subunit protein bL21 from Dictyoglomus thermophilum (strain ATCC 35947 / DSM 3960 / H-6-12).